The following is a 486-amino-acid chain: Hydrogenobyrinate a,c-diamide synthase (486 aa).

Residues 254–272 are compositionally biased toward pro residues; that stretch reads SPPPPLPVPSPGAAPPDPL. Residues 254 to 284 form a disordered region; it reads SPPPPLPVPSPGAAPPDPLVRPGRPRPQAPD. The GATase cobBQ-type domain maps to 289–474; that stretch reads RVAMASGAAF…LHTHWAAEPG (186 aa). Cysteine 372 functions as the Nucleophile in the catalytic mechanism.

The protein belongs to the CobB/CbiA family. The cofactor is Mg(2+).

The enzyme catalyses hydrogenobyrinate + 2 L-glutamine + 2 ATP + 2 H2O = hydrogenobyrinate a,c-diamide + 2 L-glutamate + 2 ADP + 2 phosphate + 2 H(+). It functions in the pathway cofactor biosynthesis; adenosylcobalamin biosynthesis; cob(II)yrinate a,c-diamide from precorrin-2 (aerobic route): step 9/10. Functionally, catalyzes the ATP-dependent amidation of the two carboxylate groups at positions a and c of hydrogenobyrinate, using either L-glutamine or ammonia as the nitrogen source. This chain is Hydrogenobyrinate a,c-diamide synthase, found in Streptomyces coelicolor (strain ATCC BAA-471 / A3(2) / M145).